The chain runs to 154 residues: N-acetylneuraminate anomerase NanQ (154 aa).

It belongs to the NanQ anomerase family. It depends on Zn(2+) as a cofactor.

The protein localises to the cytoplasm. It catalyses the reaction N-acetyl-alpha-neuraminate = aceneuramate. It carries out the reaction N-acetyl-beta-neuraminate = aceneuramate. With respect to regulation, inhibited by 1,10-phenanthroline. Opens both the alpha- and beta-forms of N-acetylneuraminate (sialic acid; Neu5Ac) to provide aceneuramate, the preferred substrate for NanA. Has preferential activity on the beta-anomer rather than the alpha-anomer. Accelerates a reaction that is spontaneous at slightly alkaline pH, facilitates the reaction at acidic pH. The chain is N-acetylneuraminate anomerase NanQ from Escherichia coli (strain K12).